We begin with the raw amino-acid sequence, 448 residues long: Zinc finger CCCH domain-containing protein 43 (448 aa).

The disordered stretch occupies residues 1-106; that stretch reads MVNSEEIADG…GWSENESENV (106 aa). A compositionally biased stretch (basic and acidic residues) spans 24–45; the sequence is SSHDRSLSDLNHAAEDLSDKLK. Over residues 63 to 79 the composition is skewed to polar residues; it reads VSESNGGLDSNAVVTIN. A compositionally biased stretch (acidic residues) spans 80–89; the sequence is QEEEEEEEDR. C3H1-type zinc fingers lie at residues 110–138, 158–186, 204–232, 346–374, and 392–420; these read RPGA…HPLA, KLGL…HTIP, RPGE…HPDP, RPDQ…HPKN, and RPDQ…HSVQ. The interval 424–448 is disordered; it reads STESSQAIVEPPQVSANGNESDGWN. The span at 437–448 shows a compositional bias: polar residues; sequence VSANGNESDGWN.

It is found in the nucleus. This is Zinc finger CCCH domain-containing protein 43 from Arabidopsis thaliana (Mouse-ear cress).